The following is a 1052-amino-acid chain: Membrane-bound transcription factor site-1 protease (1052 aa).

The N-terminal stretch at 1-17 is a signal peptide; the sequence is MKLVNIWLLLLVVLLCG. A propeptide spanning residues 18 to 186 is cleaved from the precursor; it reads KKHLGDRLEK…TGRHSSRRLL (169 aa). S168 carries the phosphoserine; by FAM20C modification. At 187–998 the chain is on the lumenal side; the sequence is RAIPRQVAQT…IMPGRYNQEV (812 aa). The Peptidase S8 domain occupies 190–472; the sequence is PRQVAQTLQA…HGKLDLLRAY (283 aa). D218 functions as the Charge relay system in the catalytic mechanism. A glycan (N-linked (GlcNAc...) asparagine) is linked at N236. The active-site Charge relay system is H249. N-linked (GlcNAc...) asparagine glycosylation is present at N305. The Charge relay system role is filled by S414. N-linked (GlcNAc...) asparagine glycosylation is found at N515 and N728. Positions 877–887 are enriched in polar residues; the sequence is PSLSHSGNRQR. The tract at residues 877–899 is disordered; that stretch reads PSLSHSGNRQRPPSGAGSVTPER. Residue N939 is glycosylated (N-linked (GlcNAc...) asparagine). The helical transmembrane segment at 999 to 1021 threads the bilayer; that stretch reads GQTIPVFAFLGAMVVLAFFVVQI. The Cytoplasmic portion of the chain corresponds to 1022–1052; it reads NKAKSRPKRRKPRVKRPQLMQQVHPPKTPSV. The span at 1027-1037 shows a compositional bias: basic residues; the sequence is RPKRRKPRVKR. A disordered region spans residues 1027–1052; the sequence is RPKRRKPRVKRPQLMQQVHPPKTPSV.

It belongs to the peptidase S8 family. Interacts with LYSET; this interaction bridges GNPTAB to MBTPS1. It depends on Ca(2+) as a cofactor. Post-translationally, the 148 kDa zymogen is processed progressively into two membrane-bound 120 and 106 kDa forms in the endoplasmic reticulum, and late into a secreted 98 kDa form. The propeptide is autocatalytically removed through an intramolecular cleavage after Leu-186. Further cleavage generates 14, 10, and 8 kDa intermediates. Widely expressed.

The protein localises to the endoplasmic reticulum membrane. It localises to the golgi apparatus membrane. It carries out the reaction Processes precursors containing basic and hydrophobic/aliphatic residues at P4 and P2, respectively, with a relatively relaxed acceptance of amino acids at P1 and P3.. With respect to regulation, inhibited by divalent copper and zinc ions, but not by nickel or cobalt. Inhibited by its prosegment, but not smaller fragments. Inhibited by 4-(2-aminoethyl)benzenesulfonyl fluoride (AEBSF), a serine protease inhibitor. In terms of biological role, serine protease that cleaves after hydrophobic or small residues, provided that Arg or Lys is in position P4: known substrates include SREBF1/SREBP1, SREBF2/SREBP2, BDNF, GNPTAB, ATF6, ATF6B and FAM20C. Cleaves substrates after Arg-Ser-Val-Leu (SREBP2), Arg-His-Leu-Leu (ATF6), Arg-Gly-Leu-Thr (BDNF) and its own propeptide after Arg-Arg-Leu-Leu. Catalyzes the first step in the proteolytic activation of the sterol regulatory element-binding proteins (SREBPs) SREBF1/SREBP1 and SREBF2/SREBP2. Also mediates the first step in the proteolytic activation of the cyclic AMP-dependent transcription factor ATF-6 (ATF6 and ATF6B). Mediates the protein cleavage of GNPTAB into subunit alpha and beta, thereby participating in biogenesis of lysosomes. Cleaves the propeptide from FAM20C which is required for FAM20C secretion from the Golgi apparatus membrane and for enhancement of FAM20C kinase activity, promoting osteoblast differentiation and biomineralization. Involved in the regulation of M6P-dependent Golgi-to-lysosome trafficking of lysosomal enzymes. It is required for the activation of CREB3L2/BBF2H7, a transcriptional activator of MIA3/TANGO and other genes controlling mega vesicle formation. Therefore, it plays a key role in the regulation of mega vesicle-mediated collagen trafficking. In astrocytes and osteoblasts, upon DNA damage and ER stress, mediates the first step of the regulated intramembrane proteolytic activation of the transcription factor CREB3L1, leading to the inhibition of cell-cycle progression. This Homo sapiens (Human) protein is Membrane-bound transcription factor site-1 protease.